A 111-amino-acid polypeptide reads, in one-letter code: Photosystem II reaction center Psb28 protein (111 aa).

Belongs to the Psb28 family. Part of the photosystem II complex.

The protein localises to the cellular thylakoid membrane. This Trichormus variabilis (strain ATCC 29413 / PCC 7937) (Anabaena variabilis) protein is Photosystem II reaction center Psb28 protein.